Consider the following 490-residue polypeptide: Cytochrome P450 monooxygenase anuE (490 aa).

C405 is a heme binding site.

Belongs to the cytochrome P450 family. Heme serves as cofactor.

It catalyses the reaction 2-hydroxymethyl-3-pentylphenol + reduced [NADPH--hemoprotein reductase] + O2 = (8S)-annullatin E + oxidized [NADPH--hemoprotein reductase] + H2O + H(+). It participates in secondary metabolite biosynthesis. Its function is as follows. Cytochrome P450 monooxygenase; part of the gene cluster that mediates the biosynthesis of annullatin D, an alkylated aromatic polyketide with a fused dihydrobenzofuran lactone ring system that exhibits potent agonistic activities toward the cannabinoid receptors. Within the pathway, anuE catalyzes the hydroxylation of 2-hydroxymethyl-3-pentylphenol at the side chain to produce (8S)-annullatin E. The annullatin backbone 2-hydroxymethyl-3-pentylphenol is assembled from one acetyl-CoA starter unit and 5 malonyl-CoA elongation units by cooperation of the highly reducing polyketide synthase anuA, the short-chain dehydrogenase anuB and the oxidoreductase anuC, before being hydroxylated at the C-5 alkyl chain by the cytochrome P450 monooxygenase anuE to form (8S)-annullatin E. The prenyltransferase anuH subsequently installs one isoprenyl group at the benzene ring to form (8S)-annullatin J. Enzymatic or nonenzymatic dihydro-benzofuran ring formation between the prenyl and the phenolic hydroxyl groups in (8S)-annullatin J results in two diastereomers (2S,9S)-annullatin H and compound 12. The intermediate (2S,9S)-annullatin H is then converted to (2S,9S)-annullatin D by the FAD-linked oxidoreductase anuG-catalyzed five-member lactone ring formation. The isomer 12 acts as a substrate for the short-chain dehydrogenase anuF and is oxidized to (2R)-annullatin F, which is subsequently acetylated by an acetyltransferase leading to (2R)-annullatin G formation. The remaining enzymes identified within the cluster, anuD, anuI and anuJ, seem not to be involved in annullatin biosynthesis. The chain is Cytochrome P450 monooxygenase anuE from Penicillium roqueforti (strain FM164).